A 687-amino-acid chain; its full sequence is Acetyl-coenzyme A synthetase 2 (687 aa).

Residues 206-209 (RGGK) and T325 each bind CoA. Residues 401–403 (GEP), 425–430 (DTMWQT), D516, and R531 each bind ATP. S539 serves as a coordination point for CoA. R542 is an ATP binding site. R617 serves as a coordination point for CoA.

It belongs to the ATP-dependent AMP-binding enzyme family.

The enzyme catalyses acetate + ATP + CoA = acetyl-CoA + AMP + diphosphate. This is Acetyl-coenzyme A synthetase 2 (ACS2) from Eremothecium gossypii (strain ATCC 10895 / CBS 109.51 / FGSC 9923 / NRRL Y-1056) (Yeast).